The following is a 123-amino-acid chain: Small ribosomal subunit protein uS13 (123 aa).

The segment at 94-123 is disordered; the sequence is RRGLPVRGQHTKNNARTRKGPARAIAGKKK.

Belongs to the universal ribosomal protein uS13 family. As to quaternary structure, part of the 30S ribosomal subunit. Forms a loose heterodimer with protein S19. Forms two bridges to the 50S subunit in the 70S ribosome.

Located at the top of the head of the 30S subunit, it contacts several helices of the 16S rRNA. In the 70S ribosome it contacts the 23S rRNA (bridge B1a) and protein L5 of the 50S subunit (bridge B1b), connecting the 2 subunits; these bridges are implicated in subunit movement. Contacts the tRNAs in the A and P-sites. The polypeptide is Small ribosomal subunit protein uS13 (Oenococcus oeni (strain ATCC BAA-331 / PSU-1)).